The chain runs to 87 residues: Small ribosomal subunit protein bS20 (87 aa).

Residues 1 to 15 (MANTRSAKKMVRKIA) show a composition bias toward basic residues. Disordered regions lie at residues 1–22 (MANT…DVNK) and 64–87 (KGVT…KAMA).

It belongs to the bacterial ribosomal protein bS20 family.

Its function is as follows. Binds directly to 16S ribosomal RNA. This chain is Small ribosomal subunit protein bS20, found in Hyphomonas neptunium (strain ATCC 15444).